The primary structure comprises 199 residues: Replication protein (199 aa).

Belongs to the Gram-positive plasmids replication protein type 2 family.

Is essential for plasmid replication. Nicks the positive strand at the plus origin of replication. The chain is Replication protein (repF) from Staphylococcus aureus.